A 265-amino-acid polypeptide reads, in one-letter code: Transcriptional repressor DcmR (265 aa).

A DNA-binding region (H-T-H motif) is located at residues Leu17 to Trp36.

As to quaternary structure, monomer.

Its function is as follows. Transcriptional repressor of the dcmA gene and of its own gene. This chain is Transcriptional repressor DcmR (dcmR), found in Methylorubrum extorquens (strain DSM 6343 / CIP 106787 / DM4) (Methylobacterium extorquens).